The following is a 177-amino-acid chain: O-acetyl-ADP-ribose deacetylase (177 aa).

The Macro domain maps to 1 to 175; sequence MKSRIHVLQG…LYNRLLTQQG (175 aa). Substrate-binding positions include 11–12, N25, 33–35, and 122–126; these read DI, GVD, and STGVY. The active-site Proton acceptor is the D35.

It belongs to the MacroD-type family. YmdB subfamily. Homodimer. Interacts with RNase III.

It catalyses the reaction 3''-O-acetyl-ADP-D-ribose + H2O = ADP-D-ribose + acetate + H(+). It carries out the reaction 2''-O-acetyl-ADP-D-ribose + H2O = ADP-D-ribose + acetate + H(+). Deacetylates O-acetyl-ADP ribose to yield ADP-ribose and free acetate. Down-regulates ribonuclease 3 (RNase III) activity. Acts by interacting directly with the region of the ribonuclease that is required for dimerization/activation. In Escherichia fergusonii (strain ATCC 35469 / DSM 13698 / CCUG 18766 / IAM 14443 / JCM 21226 / LMG 7866 / NBRC 102419 / NCTC 12128 / CDC 0568-73), this protein is O-acetyl-ADP-ribose deacetylase.